Here is a 463-residue protein sequence, read N- to C-terminus: Siroheme synthase 1 (463 aa).

Positions 1–203 (MDFLPLFCQL…GQQQAAEESV (203 aa)) are precorrin-2 dehydrogenase /sirohydrochlorin ferrochelatase. NAD(+) is bound by residues 22 to 23 (EV) and 43 to 44 (PH). At serine 128 the chain carries Phosphoserine. The interval 215 to 463 (GSVTLVGAGP…YGEANTLAGV (249 aa)) is uroporphyrinogen-III C-methyltransferase. Proline 224 contributes to the S-adenosyl-L-methionine binding site. Aspartate 247 functions as the Proton acceptor in the catalytic mechanism. Catalysis depends on lysine 269, which acts as the Proton donor. S-adenosyl-L-methionine-binding positions include 300-302 (GGD), isoleucine 305, 330-331 (TA), methionine 382, and glycine 411.

In the N-terminal section; belongs to the precorrin-2 dehydrogenase / sirohydrochlorin ferrochelatase family. The protein in the C-terminal section; belongs to the precorrin methyltransferase family.

It carries out the reaction uroporphyrinogen III + 2 S-adenosyl-L-methionine = precorrin-2 + 2 S-adenosyl-L-homocysteine + H(+). The enzyme catalyses precorrin-2 + NAD(+) = sirohydrochlorin + NADH + 2 H(+). It catalyses the reaction siroheme + 2 H(+) = sirohydrochlorin + Fe(2+). It participates in cofactor biosynthesis; adenosylcobalamin biosynthesis; precorrin-2 from uroporphyrinogen III: step 1/1. It functions in the pathway cofactor biosynthesis; adenosylcobalamin biosynthesis; sirohydrochlorin from precorrin-2: step 1/1. The protein operates within porphyrin-containing compound metabolism; siroheme biosynthesis; precorrin-2 from uroporphyrinogen III: step 1/1. Its pathway is porphyrin-containing compound metabolism; siroheme biosynthesis; siroheme from sirohydrochlorin: step 1/1. It participates in porphyrin-containing compound metabolism; siroheme biosynthesis; sirohydrochlorin from precorrin-2: step 1/1. In terms of biological role, multifunctional enzyme that catalyzes the SAM-dependent methylations of uroporphyrinogen III at position C-2 and C-7 to form precorrin-2 via precorrin-1. Then it catalyzes the NAD-dependent ring dehydrogenation of precorrin-2 to yield sirohydrochlorin. Finally, it catalyzes the ferrochelation of sirohydrochlorin to yield siroheme. The sequence is that of Siroheme synthase 1 from Aeromonas hydrophila subsp. hydrophila (strain ATCC 7966 / DSM 30187 / BCRC 13018 / CCUG 14551 / JCM 1027 / KCTC 2358 / NCIMB 9240 / NCTC 8049).